A 1070-amino-acid polypeptide reads, in one-letter code: Carbamoyl phosphate synthase large chain (1070 aa).

The tract at residues 1–401 (MPKRDDIKTI…ALLKAVRSLE (401 aa)) is carboxyphosphate synthetic domain. ATP is bound by residues Arg-129, Arg-169, Gly-175, Gly-176, Lys-208, Ile-210, Glu-215, Gly-241, Ile-242, His-243, Gln-284, and Glu-298. Positions 133–327 (RDLMNELGEP…IAKLAAKIAV (195 aa)) constitute an ATP-grasp 1 domain. Mg(2+)-binding residues include Gln-284, Glu-298, and Asn-300. Gln-284, Glu-298, and Asn-300 together coordinate Mn(2+). Positions 402–546 (IGADHLLLEE…YSTYEEENES (145 aa)) are oligomerization domain. A carbamoyl phosphate synthetic domain region spans residues 547–929 (TRSAKESVIV…ALYKGFVASG (383 aa)). The region spanning 671–861 (EKALEILQIP…MANVATRVIL (191 aa)) is the ATP-grasp 2 domain. The ATP site is built by Arg-707, Arg-746, Val-748, Glu-752, Gly-777, Val-778, His-779, Ser-780, Gln-820, and Glu-832. Residues Gln-820, Glu-832, and Asn-834 each contribute to the Mg(2+) site. Mn(2+)-binding residues include Gln-820, Glu-832, and Asn-834. In terms of domain architecture, MGS-like spans 930–1070 (TTMHDYGTVL…SEVKQPKARV (141 aa)). Residues 930–1070 (TTMHDYGTVL…SEVKQPKARV (141 aa)) form an allosteric domain region.

Belongs to the CarB family. Composed of two chains; the small (or glutamine) chain promotes the hydrolysis of glutamine to ammonia, which is used by the large (or ammonia) chain to synthesize carbamoyl phosphate. Tetramer of heterodimers (alpha,beta)4. Requires Mg(2+) as cofactor. Mn(2+) is required as a cofactor.

The enzyme catalyses hydrogencarbonate + L-glutamine + 2 ATP + H2O = carbamoyl phosphate + L-glutamate + 2 ADP + phosphate + 2 H(+). It carries out the reaction hydrogencarbonate + NH4(+) + 2 ATP = carbamoyl phosphate + 2 ADP + phosphate + 2 H(+). It participates in amino-acid biosynthesis; L-arginine biosynthesis; carbamoyl phosphate from bicarbonate: step 1/1. Its pathway is pyrimidine metabolism; UMP biosynthesis via de novo pathway; (S)-dihydroorotate from bicarbonate: step 1/3. Large subunit of the glutamine-dependent carbamoyl phosphate synthetase (CPSase). CPSase catalyzes the formation of carbamoyl phosphate from the ammonia moiety of glutamine, carbonate, and phosphate donated by ATP, constituting the first step of 2 biosynthetic pathways, one leading to arginine and/or urea and the other to pyrimidine nucleotides. The large subunit (synthetase) binds the substrates ammonia (free or transferred from glutamine from the small subunit), hydrogencarbonate and ATP and carries out an ATP-coupled ligase reaction, activating hydrogencarbonate by forming carboxy phosphate which reacts with ammonia to form carbamoyl phosphate. This chain is Carbamoyl phosphate synthase large chain, found in Listeria monocytogenes serotype 4b (strain F2365).